Consider the following 73-residue polypeptide: uncharacterized protein (73 aa).

A coiled-coil region spans residues Asn-20–Thr-49.

This is an uncharacterized protein from Acheta domesticus (House cricket).